Reading from the N-terminus, the 244-residue chain is 2,3-bisphosphoglycerate-dependent phosphoglycerate mutase (244 aa).

Substrate is bound by residues 8–15 (RHGESNWN), 21–22 (TG), Arg60, 87–90 (ERHY), Lys98, 114–115 (RR), and 181–182 (GN). His9 serves as the catalytic Tele-phosphohistidine intermediate. Glu87 (proton donor/acceptor) is an active-site residue.

Belongs to the phosphoglycerate mutase family. BPG-dependent PGAM subfamily.

The catalysed reaction is (2R)-2-phosphoglycerate = (2R)-3-phosphoglycerate. It participates in carbohydrate degradation; glycolysis; pyruvate from D-glyceraldehyde 3-phosphate: step 3/5. Functionally, catalyzes the interconversion of 2-phosphoglycerate and 3-phosphoglycerate. The protein is 2,3-bisphosphoglycerate-dependent phosphoglycerate mutase of Frankia alni (strain DSM 45986 / CECT 9034 / ACN14a).